A 451-amino-acid polypeptide reads, in one-letter code: Phenylalanine-4-hydroxylase (451 aa).

Residue S16 is modified to Phosphoserine; by PKA. Residues 35–113 enclose the ACT domain; sequence SLIFSLKEEV…TVHELSRDKK (79 aa). H284, H289, and E329 together coordinate Fe cation.

It belongs to the biopterin-dependent aromatic amino acid hydroxylase family. Homodimer and homotetramer. Fe(2+) is required as a cofactor. Phosphorylation at Ser-16 increases basal activity and facilitates activation by the substrate phenylalanine.

The enzyme catalyses (6R)-L-erythro-5,6,7,8-tetrahydrobiopterin + L-phenylalanine + O2 = (4aS,6R)-4a-hydroxy-L-erythro-5,6,7,8-tetrahydrobiopterin + L-tyrosine. Its pathway is amino-acid degradation; L-phenylalanine degradation; acetoacetate and fumarate from L-phenylalanine: step 1/6. Its activity is regulated as follows. N-terminal region of PAH is thought to contain allosteric binding sites for phenylalanine and to constitute an 'inhibitory' domain that regulates the activity of a catalytic domain in the C-terminal portion of the molecule. Functionally, catalyzes the hydroxylation of L-phenylalanine to L-tyrosine. In Bos taurus (Bovine), this protein is Phenylalanine-4-hydroxylase (PAH).